The following is a 549-amino-acid chain: Beta-mannosyltransferase 3 (549 aa).

The Cytoplasmic segment spans residues M1–K37. Residues V38–I58 form a helical membrane-spanning segment. The Extracellular portion of the chain corresponds to N59–R549.

It belongs to the BMT family.

Its subcellular location is the membrane. Its function is as follows. Beta-mannosyltransferase involved in cell wall biosynthesis. Required for addition of the second beta-mannose residue to acid-stable fraction of cell wall phosphopeptidomannan, and in elongation of beta-mannose chains on the phosphopeptidomannan acid-labile fraction. The sequence is that of Beta-mannosyltransferase 3 (BMT3) from Candida albicans (strain SC5314 / ATCC MYA-2876) (Yeast).